The sequence spans 316 residues: uncharacterized protein (316 aa).

Residues 12 to 34 (RWVCLTSVILFCFCIAVMRYGGV) traverse the membrane as a helical segment.

Its subcellular location is the membrane. This is an uncharacterized protein from Treponema pallidum (strain Nichols).